Here is a 354-residue protein sequence, read N- to C-terminus: Protein RecA (354 aa).

An ATP-binding site is contributed by 67 to 74; it reads GPESSGKT. The disordered stretch occupies residues 331–354; it reads GGANSSDSKTESDENIDLETGEVF. Positions 343–354 are enriched in acidic residues; that stretch reads DENIDLETGEVF.

The protein belongs to the RecA family.

It localises to the cytoplasm. Functionally, can catalyze the hydrolysis of ATP in the presence of single-stranded DNA, the ATP-dependent uptake of single-stranded DNA by duplex DNA, and the ATP-dependent hybridization of homologous single-stranded DNAs. It interacts with LexA causing its activation and leading to its autocatalytic cleavage. The protein is Protein RecA of Shewanella frigidimarina (strain NCIMB 400).